An 874-amino-acid polypeptide reads, in one-letter code: Alanine--tRNA ligase (874 aa).

Zn(2+) contacts are provided by H562, H566, C665, and H669.

It belongs to the class-II aminoacyl-tRNA synthetase family. It depends on Zn(2+) as a cofactor.

It is found in the cytoplasm. It carries out the reaction tRNA(Ala) + L-alanine + ATP = L-alanyl-tRNA(Ala) + AMP + diphosphate. Functionally, catalyzes the attachment of alanine to tRNA(Ala) in a two-step reaction: alanine is first activated by ATP to form Ala-AMP and then transferred to the acceptor end of tRNA(Ala). Also edits incorrectly charged Ser-tRNA(Ala) and Gly-tRNA(Ala) via its editing domain. The polypeptide is Alanine--tRNA ligase (Pseudomonas putida (strain W619)).